Consider the following 160-residue polypeptide: uncharacterized protein (160 aa).

This is an uncharacterized protein from Gracula (BFDV).